A 255-amino-acid polypeptide reads, in one-letter code: Imidazole glycerol phosphate synthase subunit HisF (255 aa).

Residues Asp-12 and Asp-131 contribute to the active site.

It belongs to the HisA/HisF family. As to quaternary structure, heterodimer of HisH and HisF.

The protein localises to the cytoplasm. It carries out the reaction 5-[(5-phospho-1-deoxy-D-ribulos-1-ylimino)methylamino]-1-(5-phospho-beta-D-ribosyl)imidazole-4-carboxamide + L-glutamine = D-erythro-1-(imidazol-4-yl)glycerol 3-phosphate + 5-amino-1-(5-phospho-beta-D-ribosyl)imidazole-4-carboxamide + L-glutamate + H(+). It participates in amino-acid biosynthesis; L-histidine biosynthesis; L-histidine from 5-phospho-alpha-D-ribose 1-diphosphate: step 5/9. In terms of biological role, IGPS catalyzes the conversion of PRFAR and glutamine to IGP, AICAR and glutamate. The HisF subunit catalyzes the cyclization activity that produces IGP and AICAR from PRFAR using the ammonia provided by the HisH subunit. This chain is Imidazole glycerol phosphate synthase subunit HisF, found in Zymomonas mobilis subsp. mobilis (strain ATCC 31821 / ZM4 / CP4).